The chain runs to 578 residues: Arginine--tRNA ligase (578 aa).

Positions 127 to 137 match the 'HIGH' region motif; that stretch reads PNLAKEMHVGH.

This sequence belongs to the class-I aminoacyl-tRNA synthetase family. In terms of assembly, monomer.

It is found in the cytoplasm. The catalysed reaction is tRNA(Arg) + L-arginine + ATP = L-arginyl-tRNA(Arg) + AMP + diphosphate. This is Arginine--tRNA ligase from Pseudomonas syringae pv. tomato (strain ATCC BAA-871 / DC3000).